The sequence spans 118 residues: Large ribosomal subunit protein bL20 (118 aa).

Belongs to the bacterial ribosomal protein bL20 family.

In terms of biological role, binds directly to 23S ribosomal RNA and is necessary for the in vitro assembly process of the 50S ribosomal subunit. It is not involved in the protein synthesizing functions of that subunit. This Hamiltonella defensa subsp. Acyrthosiphon pisum (strain 5AT) protein is Large ribosomal subunit protein bL20.